Here is a 184-residue protein sequence, read N- to C-terminus: Uroplakin-2 (184 aa).

The signal sequence occupies residues 1 to 25 (MAPLLPIRTLPLILILLALLSPGAA). Positions 26–84 (DFNISSLSGLLSPALTESLLVALPPCHLTGGNATLMVRRANDSKVVTSSFVVPPCRGRR) are excised as a propeptide. 3 N-linked (GlcNAc...) asparagine glycosylation sites follow: asparagine 28, asparagine 57, and asparagine 66. At 85 to 155 (ELVSVVDSGA…IGLGMARTGG (71 aa)) the chain is on the lumenal side. Residues 156-176 (MVVITVLLSVAMFLLVLGFII) form a helical membrane-spanning segment. Topologically, residues 177–184 (ALALGSRK) are cytoplasmic.

It belongs to the uroplakin-2 family. In terms of assembly, interacts with uroplakin-1a (UPK1A). Expressed in ureter.

It is found in the cell membrane. Component of the asymmetric unit membrane (AUM); a highly specialized biomembrane elaborated by terminally differentiated urothelial cells. May play an important role in regulating the assembly of the AUM. This is Uroplakin-2 (UPK2) from Homo sapiens (Human).